The chain runs to 486 residues: Cardiolipin synthase A (486 aa).

2 consecutive transmembrane segments (helical) span residues 3–23 and 38–58; these read TFYTVVSWLIILGYWLLIAGV and MAWLLVIYILPLVGIVAYLSV. PLD phosphodiesterase domains are found at residues 219–246 and 399–426; these read MDLRQHRKMIMIDNYIAYTGSMNMVDPR and EGGLLHTKSVLVDGELSLVGTVNLDMRS. Residues H224, K226, D231, H404, K406, and D411 contribute to the active site.

It belongs to the phospholipase D family. Cardiolipin synthase subfamily. ClsA sub-subfamily.

The protein resides in the cell inner membrane. The enzyme catalyses 2 a 1,2-diacyl-sn-glycero-3-phospho-(1'-sn-glycerol) = a cardiolipin + glycerol. Its function is as follows. Catalyzes the reversible phosphatidyl group transfer from one phosphatidylglycerol molecule to another to form cardiolipin (CL) (diphosphatidylglycerol) and glycerol. The polypeptide is Cardiolipin synthase A (Cronobacter sakazakii (strain ATCC BAA-894) (Enterobacter sakazakii)).